A 237-amino-acid chain; its full sequence is MAPVRRILLKLSGEALMGPDSFGYHAGTMAGFVGQIRDVVALGVQVGIVVGGGNLFRGATGALAGMNRATADSMGMLATVMNALALKDALQQAGVAARVQTAVHIAHVGEGFERDAAVRELEAGRVVIFGGGTGNPFFTTDTAAALRAAEIDADLLLKATKVDGVYTADPNKDPDARRYDTLSFDEAIAKQLGVLDTAAFALCREQKLSLVVFNVFKPGALKRVVMGEDEGTRVSNH.

Position 10–13 (10–13 (KLSG)) interacts with ATP. Gly-52 contributes to the UMP binding site. The ATP site is built by Gly-53 and Arg-57. Residues Asp-72 and 133–140 (TGNPFFTT) contribute to the UMP site. ATP is bound by residues Thr-160, Tyr-166, and Asp-169.

This sequence belongs to the UMP kinase family. Homohexamer.

The protein resides in the cytoplasm. It carries out the reaction UMP + ATP = UDP + ADP. It functions in the pathway pyrimidine metabolism; CTP biosynthesis via de novo pathway; UDP from UMP (UMPK route): step 1/1. Inhibited by UTP. Functionally, catalyzes the reversible phosphorylation of UMP to UDP. This chain is Uridylate kinase, found in Thiobacillus denitrificans (strain ATCC 25259 / T1).